The following is a 120-amino-acid chain: Large ribosomal subunit protein bL17 (120 aa).

It belongs to the bacterial ribosomal protein bL17 family. In terms of assembly, part of the 50S ribosomal subunit. Contacts protein L32.

In Bacillus cereus (strain ATCC 14579 / DSM 31 / CCUG 7414 / JCM 2152 / NBRC 15305 / NCIMB 9373 / NCTC 2599 / NRRL B-3711), this protein is Large ribosomal subunit protein bL17.